The following is a 458-amino-acid chain: Chromosomal replication initiator protein DnaA (458 aa).

The tract at residues 1–79 (MSLAIWQECL…ENPNHSVKIR (79 aa)) is domain I, interacts with DnaA modulators. Residues 79 to 120 (RLMVGNVSSVEKKPAKQIPTQAPLTNQPWEGESKAHRVPHKS) are domain II. Residues 92 to 114 (PAKQIPTQAPLTNQPWEGESKAH) are disordered. Residues 96-106 (IPTQAPLTNQP) show a composition bias toward polar residues. The domain III, AAA+ region stretch occupies residues 121 to 338 (NLIKKYTFDN…GAIANISAKA (218 aa)). ATP contacts are provided by Gly-165, Gly-167, Lys-168, and Thr-169. Residues 339–458 (QFTGQGITIS…YKILIRTLSM (120 aa)) form a domain IV, binds dsDNA region.

This sequence belongs to the DnaA family. Oligomerizes as a right-handed, spiral filament on DNA at oriC.

It localises to the cytoplasm. Its function is as follows. Plays an essential role in the initiation and regulation of chromosomal replication. ATP-DnaA binds to the origin of replication (oriC) to initiate formation of the DNA replication initiation complex once per cell cycle. Binds the DnaA box (a 9 base pair repeat at the origin) and separates the double-stranded (ds)DNA. Forms a right-handed helical filament on oriC DNA; dsDNA binds to the exterior of the filament while single-stranded (ss)DNA is stabiized in the filament's interior. The ATP-DnaA-oriC complex binds and stabilizes one strand of the AT-rich DNA unwinding element (DUE), permitting loading of DNA polymerase. After initiation quickly degrades to an ADP-DnaA complex that is not apt for DNA replication. Binds acidic phospholipids. The chain is Chromosomal replication initiator protein DnaA from Psychromonas ingrahamii (strain DSM 17664 / CCUG 51855 / 37).